We begin with the raw amino-acid sequence, 403 residues long: LIM/homeobox protein Lhx1 (403 aa).

LIM zinc-binding domains are found at residues 4–54 (CAGC…CKND) and 63–117 (CAGC…CKED). The span at 131–147 (ISVTGSDPSLSPESQDP) shows a compositional bias: polar residues. Disordered regions lie at residues 131 to 185 (ISVT…PRTT) and 318 to 366 (PAGT…SMHS). A compositionally biased stretch (basic and acidic residues) spans 150–166 (DDAKDSESANVSDKEAG). The segment at residues 179–238 (RRGPRTTIKAKQLETLKAAFAATPKPTRHIREQLAQETGLNMRVIQVWFQNRRSKERRMK) is a DNA-binding region (homeobox).

Interacts with ldb1 via the tandem LIM domains. Both LIM domains are required for optimal binding and binding relieves the inhibitory effect of the LIM domains and activates lhx1. Binding to ldb1 also prevents degradation of ldb1 by rnf12. The stoichiometry of lhx1 and ldb1 is important for their function and an excess of ldb1 can inhibit lhx1 function. Interacts with the N-terminal region of rnf12 by a homeobox-dependent mechanism. In terms of tissue distribution, exhibits a biphasic expression pattern. Initially localized to the Spemann organizer region of gastrulae, leading to expression in prechordal mesoderm and notochord. In the second phase, expressed in the lateral mesoderm and neural plate, eventually concentrating in the pronephros and the CNS. Expressed in the pronephros primordium by late gastrula (stage 12.5) and becomes restricted to the tips of the tubules and ducts as kidney development progresses. In the CNS, becomes progressively recognizable in anatomically distinct structures during larval development. Within the forebrain, shows almost identical expression to lhx5 in the diencephalon, being expressed in alternating stripes to lhx2 and lhx9. Expressed in the diencephalic pretectum within prosomere 1, hypothalamus, ventral thalamus and zona limitans intrathalamica. In the telencephalon, the expression pattern is distinct from lhx5, being localized in the pallium and subpallium. Also expressed in the ventral territories of midbrain (mesencephalon) and hindbrain (rhombencephalon), being expressed in the mesencephalic tegmentum and hindbrain reticular formation. Also shows intense expression in the cerebellum including Purkinje cells.

It localises to the nucleus. Its function is as follows. Involved in the establishment of the body plan via the Spemann organizer during gastrulation. Transcriptional activator required to induce organizer gene expression downstream of siamois. Promotes head formation by binding to 5'-TAAT'-3' elements in the promoters of head organizer genes cer1 and gsc to stimulate expression. Binds as a complex with siamois and mix-A/mix.1 to the cer1 promoter, and with ldb1 and otx2 to the gsc promoter. Also involved in neural induction via the organizer, including a role in notochord formation. Acts synergistically with ldb1 and ssbp in subsequent axis formation. Involved in kidney development, acting synergistically with pax8 to establish the pronephric primordium in late gastrulae/early neurulae and with pax2 during pronephric morphogenesis in tailbud stages. Has a later role in mediating the activity of inhibitors of ventralization. In Xenopus laevis (African clawed frog), this protein is LIM/homeobox protein Lhx1 (lhx1).